Here is a 204-residue protein sequence, read N- to C-terminus: MGDTDLPCVTGVLLAAGAGKRLGRGPKALLPYRGRTLVEDAAETMLVGGCHEVVIVLGANAQAVCARANLEPYRIVVNHDWSSGMGSSYLAGDAAAHTKNHILVALVDQPGLSVTTVGRLLVSHRPGRISSAAYSSLDSPRVLRRGHPMVIDAGLRPAVASTVSGDAGARVFLRQKPWLVDLIDCSDESTGEDVDTVEQMYRLL.

In terms of assembly, homotetramer. FMN serves as cofactor.

It catalyses the reaction 3,3'-bipyridine-2,2',5,5',6,6'-hexol + NADP(+) = (E)-2,2',5,5'-tetrahydroxy-6H,6'H-(3,3'-bipyridinylidene)-6,6'-dione + NADPH + 3 H(+). The catalysed reaction is 3,3'-bipyridine-2,2',5,5',6,6'-hexol + NAD(+) = (E)-2,2',5,5'-tetrahydroxy-6H,6'H-(3,3'-bipyridinylidene)-6,6'-dione + NADH + 3 H(+). It participates in alkaloid degradation; nicotine degradation. Catalyzes the reduction of nicotine blue to its hydroquinone form. Nicotine blue is the name given to the compound formed by the autocatalytic condensation of two molecules of 2,3,6-trihydroxypyridine, an intermediate in the nicotine degradation pathway. May play a role in preventing the intracellular formation of nicotine blue semiquinone radicals, which by redox cycling would lead to the formation of toxic reactive oxygen species. Besides nicotine blue, several other quinones are reduced by nboR. The protein is Nicotine blue oxidoreductase (nboR) of Paenarthrobacter nicotinovorans (Arthrobacter nicotinovorans).